Reading from the N-terminus, the 142-residue chain is MPTPSMEDYIEKIYSLIETKGYARVSDIADELFVHPSSVTKMVQKLDKDEYLIYEKYRGLILTPKGTQMGKRLLERHALLESFLSIIGVDPSHIYHDVEGIEHHLSWNSIDRIGDVVQFFENHPDALKTLKEMDPTKPDTKE.

The HTH dtxR-type domain occupies 1–63 (MPTPSMEDYI…YEKYRGLILT (63 aa)). 6 residues coordinate Mn(2+): D8, E11, H77, E99, E102, and H103.

The protein belongs to the DtxR/MntR family. As to quaternary structure, homodimer.

The protein resides in the cytoplasm. Its activity is regulated as follows. DNA binding is strongly activated by Mn(2+). In terms of biological role, central regulator of manganese homeostasis. This is HTH-type transcriptional regulator MntR from Listeria innocua serovar 6a (strain ATCC BAA-680 / CLIP 11262).